Reading from the N-terminus, the 1212-residue chain is Peregrin (1212 aa).

Residues 21 to 47 (YECPVETCRKVYKSYSGIEYHLYHYDH) form a C2H2-type zinc finger. Disordered regions lie at residues 43–87 (YHYD…SPGR) and 118–176 (VVSE…PKLP). A compositionally biased stretch (basic residues) spans 58–67 (LRKHKKKGRQ). The tract at residues 59-221 (RKHKKKGRQS…VEYDMDEEDY (163 aa)) is interaction with KAT6A and KAT6B. Residues 74 to 85 (QSPSPSEVSQSP) show a composition bias toward low complexity. Acidic residues predominate over residues 119-130 (VSEDEEAPEEAP). At serine 120 the chain carries Phosphoserine. Lysine 147 carries the post-translational modification N6-acetyllysine. A compositionally biased stretch (basic residues) spans 148-166 (SGKHKNKEKRKDSNHHHHS). Position 237 is a phosphoserine (serine 237). The PHD-type 1 zinc-finger motif lies at 272–322 (DAVCCICNDGECQNSNVILFCDMCNLAVHQECYGVPYIPEGQWLCRRCLQS). A C2HC pre-PHD-type zinc finger spans residues 326-359 (AVDCALCPNKGGAFKQTDDGRWAHVVCALWIPEV). The PHD-type 2 zinc-finger motif lies at 383–447 (LTCYICKQRG…RKTAYCDIHT (65 aa)). Residues 447–489 (TPPGSARRLPALSHSEGEEEEDEEEDEGKSWSSEKVKKAKAKS) form a disordered region. Residues serine 459 and serine 461 each carry the phosphoserine modification. A compositionally biased stretch (acidic residues) spans 463–473 (GEEEEDEEEDE). Positions 500–819 (LAEKRAAAPV…IKKEMTALRR (320 aa)) are interaction with MEAF6 and ING5. The interval 542-1077 (YWTLKRQSRN…RGAGWLSEDE (536 aa)) is required for RUNX1 and RUNX2 transcriptional activation. Residue lysine 579 is modified to N6-acetyllysine. The Bromo domain maps to 627–731 (MQLTPFLILL…EQGGAVLRQA (105 aa)). The tract at residues 817 to 1060 (LRRKLAHQRE…VGTGRGVGHS (244 aa)) is disordered. Residues 823 to 836 (HQRETGRDGPERHG) are compositionally biased toward basic and acidic residues. Residue threonine 856 is modified to Phosphothreonine. Residues 856–869 (TDSAAEESSSQETS) show a composition bias toward low complexity. 4 positions are modified to phosphoserine: serine 858, serine 915, serine 920, and serine 924. A compositionally biased stretch (low complexity) spans 993-1019 (PRSSSDSESSSSSSSSAASDRTSTTPS). The residue at position 1074 (serine 1074) is a Phosphoserine. The PWWP domain occupies 1083–1166 (ALDLVWAKCR…RTKLVPLGVN (84 aa)). The residue at position 1185 (serine 1185) is a Phosphoserine.

Component of some HBO1 complex composed of KAT7/HBO1, MEAF6, ING5, and BRPF1. Component of the MOZ/MORF complex composed at least of ING5, KAT6A, KAT6B, MEAF6 and one of BRPF1, BRD1/BRPF2 and BRPF3. Interacts (via PHD-type zinc finger domains) with unmethylated histone H3 at 'Lys-4' (H3K4me0). Interacts with trimethylated 'Lys-36' of histone H3 (H3K36me3). Interacts with ING5; interaction directs BRPF1 to H4K4me3-enriched chromatin at the 5' of active genes. Interacts with KAT7. Acetylated by KAT6A. As to expression, expressed at low level in most tissues, with high expression in the testis and specific regions of the brain.

The protein localises to the nucleus. It is found in the chromosome. The protein resides in the cytoplasm. Its function is as follows. Scaffold subunit of various histone acetyltransferase (HAT) complexes, such as the MOZ/MORF and HBO1 complexes, which have a histone H3 acetyltransferase activity. Plays a key role in HBO1 complex by directing KAT7/HBO1 specificity towards histone H3 'Lys-14' acetylation (H3K14ac). Some HAT complexes preferentially mediate histone H3 'Lys-23' (H3K23ac) acetylation. Positively regulates the transcription of RUNX1 and RUNX2. This is Peregrin from Mus musculus (Mouse).